Reading from the N-terminus, the 331-residue chain is Glucan endo-1,3-beta-glucosidase, acidic isoform GL161 (331 aa).

Positions 1-9 (MCSIQIIGA) are cleaved as a signal peptide. Gln-10 carries the post-translational modification Pyrrolidone carboxylic acid. N-linked (GlcNAc...) asparagine glycosylation is found at Asn-55 and Asn-75. Catalysis depends on Glu-244, which acts as the Nucleophile.

The protein belongs to the glycosyl hydrolase 17 family. In terms of tissue distribution, is expressed primarily in epidermal cell of healthy plant, and following induction by ethylene, accumulates in mesophyll cells.

The protein resides in the secreted. It is found in the extracellular space. The catalysed reaction is Hydrolysis of (1-&gt;3)-beta-D-glucosidic linkages in (1-&gt;3)-beta-D-glucans.. In terms of biological role, is thought to be an important plant defense-related product against fungal pathogens. This Nicotiana tabacum (Common tobacco) protein is Glucan endo-1,3-beta-glucosidase, acidic isoform GL161.